The chain runs to 668 residues: Small ribosomal subunit protein mS81 (rPPR8) (668 aa).

The N-terminal 36 residues, Met1 to Phe36, are a transit peptide targeting the mitochondrion. PPR repeat units follow at residues Asp286–Val320, Glu321–Ser355, Thr396–Pro430, Ser431–Leu465, Asp466–Asn496, Ala502–Pro537, and Lys543–Pro577.

The protein belongs to the PPR family. P subfamily. As to quaternary structure, component of the mitochondrial ribosome small subunit.

It is found in the mitochondrion. The chain is Small ribosomal subunit protein mS81 (rPPR8) from Arabidopsis thaliana (Mouse-ear cress).